Reading from the N-terminus, the 479-residue chain is F-box/LRR-repeat protein 16 (479 aa).

A disordered region spans residues M1–A62. Pro residues predominate over residues C47–L60. R92 is modified (omega-N-methylarginine). Residues P94–P139 form the F-box domain. LRR repeat units lie at residues I244–L266, L267–A290, L319–E343, L345–C369, L371–T395, M396–A420, and L446–Q470.

In terms of assembly, interacts with SKP1 and CUL1.

Substrate-recognition component of the SCF (SKP1-CUL1-F-box protein)-type E3 ubiquitin ligase complex. This is F-box/LRR-repeat protein 16 (FBXL16) from Homo sapiens (Human).